The primary structure comprises 190 residues: Histone H5 (190 aa).

The disordered stretch occupies residues 1-29 (MTESLVLSPAPAKPKRVKASRRSASHPTY). Positions 13 to 24 (KPKRVKASRRSA) are enriched in basic residues. S23, S30, S146, and S167 each carry phosphoserine. In terms of domain architecture, H15 spans 25 to 98 (SHPTYSEMIA…GASGSFRLAK (74 aa)). The interval 87–190 (GVGASGSFRL…SGARKSPKKK (104 aa)) is disordered. Positions 104 to 190 (RSPGKKKKAV…SGARKSPKKK (87 aa)) are enriched in basic residues.

The protein belongs to the histone H1/H5 family. Erythroid cells.

Its subcellular location is the nucleus. The protein localises to the chromosome. In terms of biological role, histone H5 performs the same function as H1, being necessary for the condensation of nucleosome chains into higher order structures, and replaces histone H1 in certain cells. The chain is Histone H5 from Gallus gallus (Chicken).